The chain runs to 392 residues: 6-aminohexanoate-dimer hydrolase (392 aa).

The tract at residues 1-22 (MNARSTGQHPARYPGAAAGEPT) is disordered. Serine 112 is a catalytic residue.

The catalysed reaction is [N-(6-aminohexanoyl)](n) + H2O = [N-(6-aminohexanoyl)](n-1) + 6-aminohexanoate. It carries out the reaction N-(6-aminohexanoyl)-6-aminohexanoate + H2O = 2 6-aminohexanoate. It participates in xenobiotic degradation; nylon-6 oligomer degradation. Its function is as follows. Involved in nylon oligomer degradation. The protein is 6-aminohexanoate-dimer hydrolase of Paenarthrobacter ureafaciens.